The chain runs to 115 residues: Peptidyl-tRNA hydrolase (115 aa).

It belongs to the PTH2 family.

It localises to the cytoplasm. It carries out the reaction an N-acyl-L-alpha-aminoacyl-tRNA + H2O = an N-acyl-L-amino acid + a tRNA + H(+). In terms of biological role, the natural substrate for this enzyme may be peptidyl-tRNAs which drop off the ribosome during protein synthesis. This chain is Peptidyl-tRNA hydrolase, found in Methanocaldococcus jannaschii (strain ATCC 43067 / DSM 2661 / JAL-1 / JCM 10045 / NBRC 100440) (Methanococcus jannaschii).